Here is a 32-residue protein sequence, read N- to C-terminus: U3-theraphotoxin-Hhn1r (32 aa).

3 disulfide bridges follow: Cys2–Cys15, Cys9–Cys20, and Cys14–Cys27.

It belongs to the neurotoxin 10 (Hwtx-1) family. 16 (Hntx-8) subfamily. As to expression, expressed by the venom gland.

The protein localises to the secreted. Functionally, ion channel inhibitor. This chain is U3-theraphotoxin-Hhn1r, found in Cyriopagopus hainanus (Chinese bird spider).